A 180-amino-acid polypeptide reads, in one-letter code: Inner membrane-spanning protein YciB (180 aa).

Helical transmembrane passes span 25-45, 49-69, 76-96, 118-138, and 150-170; these read QNAT…CYVI, VSKL…ITLI, IKIK…MSGI, IILS…NEIV, and FKVF…LPLL.

This sequence belongs to the YciB family.

The protein localises to the cell inner membrane. In terms of biological role, plays a role in cell envelope biogenesis, maintenance of cell envelope integrity and membrane homeostasis. This Rickettsia felis (strain ATCC VR-1525 / URRWXCal2) (Rickettsia azadi) protein is Inner membrane-spanning protein YciB.